The following is a 368-amino-acid chain: GLABROUS1 enhancer-binding protein-like (368 aa).

The interval 1 to 123 is disordered; that stretch reads MAPKKAEEVV…TSDTEHVKKP (123 aa). Residues 17–31 show a composition bias toward acidic residues; the sequence is SEEEESGSSGEESES. Positions 35 to 47 are enriched in basic and acidic residues; the sequence is VPKKVESSQKPES. Positions 84–97 are enriched in polar residues; that stretch reads TSGSAATVPESSTA. Residues 100 to 123 are compositionally biased toward basic and acidic residues; it reads PLKEAAPEAIKKQKTSDTEHVKKP.

The protein belongs to the GeBP family. As to quaternary structure, mono-, di- and oligomers. Associated with the Mediator complex. Interacts with MED6. Interacts with MED10A, MED28 and MED32. Interacts with DEK3.

The protein localises to the nucleus. Transcription factor that binds promoters containing the CryR2 element, 5'-ACATAWCT-3'. The DNA-binding activity is decreased upon direct physical interaction with the mediator subunits and is modulated by redox conditions. The oxidized protein is the preferential binding form. In Arabidopsis thaliana (Mouse-ear cress), this protein is GLABROUS1 enhancer-binding protein-like.